A 115-amino-acid chain; its full sequence is U3-lycotoxin-Ls1b (115 aa).

The N-terminal stretch at 1–20 (MKFVLLFGVLLVTLFSYSSA) is a signal peptide. A propeptide spanning residues 21–44 (EMLDDFDQADEDELLSLIEKEEAR) is cleaved from the precursor. Cystine bridges form between cysteine 48–cysteine 63, cysteine 55–cysteine 72, cysteine 62–cysteine 87, and cysteine 74–cysteine 85.

It belongs to the neurotoxin 19 (CSTX) family. 01 subfamily. Expressed by the venom gland.

It localises to the secreted. This chain is U3-lycotoxin-Ls1b, found in Lycosa singoriensis (Wolf spider).